Consider the following 275-residue polypeptide: Rhamnulose-1-phosphate aldolase (275 aa).

Residue E117 is part of the active site. Zn(2+)-binding residues include H141, H143, and H212.

This sequence belongs to the aldolase class II family. RhaD subfamily. In terms of assembly, homotetramer. Zn(2+) is required as a cofactor.

It is found in the cytoplasm. It carries out the reaction L-rhamnulose 1-phosphate = (S)-lactaldehyde + dihydroxyacetone phosphate. It participates in carbohydrate degradation; L-rhamnose degradation; glycerone phosphate from L-rhamnose: step 3/3. Its function is as follows. Catalyzes the reversible cleavage of L-rhamnulose-1-phosphate to dihydroxyacetone phosphate (DHAP) and L-lactaldehyde. The protein is Rhamnulose-1-phosphate aldolase of Citrobacter koseri (strain ATCC BAA-895 / CDC 4225-83 / SGSC4696).